Consider the following 55-residue polypeptide: ATP synthase F(0) complex subunit 8 (55 aa).

A helical membrane pass occupies residues 4–24 (LNPAPWFAILVFSWLVFLTVI). The segment at 36 to 55 (EPTSQSTEKTKPEPWNWPWH) is disordered.

Belongs to the ATPase protein 8 family. In terms of assembly, component of the ATP synthase complex composed at least of ATP5F1A/subunit alpha, ATP5F1B/subunit beta, ATP5MC1/subunit c (homooctomer), MT-ATP6/subunit a, MT-ATP8/subunit 8, ATP5ME/subunit e, ATP5MF/subunit f, ATP5MG/subunit g, ATP5MK/subunit k, ATP5MJ/subunit j, ATP5F1C/subunit gamma, ATP5F1D/subunit delta, ATP5F1E/subunit epsilon, ATP5PF/subunit F6, ATP5PB/subunit b, ATP5PD/subunit d, ATP5PO/subunit OSCP. ATP synthase complex consists of a soluble F(1) head domain (subunits alpha(3) and beta(3)) - the catalytic core - and a membrane F(0) domain - the membrane proton channel (subunits c, a, 8, e, f, g, k and j). These two domains are linked by a central stalk (subunits gamma, delta, and epsilon) rotating inside the F1 region and a stationary peripheral stalk (subunits F6, b, d, and OSCP).

The protein localises to the mitochondrion membrane. Its function is as follows. Subunit 8, of the mitochondrial membrane ATP synthase complex (F(1)F(0) ATP synthase or Complex V) that produces ATP from ADP in the presence of a proton gradient across the membrane which is generated by electron transport complexes of the respiratory chain. ATP synthase complex consist of a soluble F(1) head domain - the catalytic core - and a membrane F(1) domain - the membrane proton channel. These two domains are linked by a central stalk rotating inside the F(1) region and a stationary peripheral stalk. During catalysis, ATP synthesis in the catalytic domain of F(1) is coupled via a rotary mechanism of the central stalk subunits to proton translocation. In vivo, can only synthesize ATP although its ATP hydrolase activity can be activated artificially in vitro. Part of the complex F(0) domain. This is ATP synthase F(0) complex subunit 8 from Salvelinus alpinus (Arctic char).